A 298-amino-acid chain; its full sequence is 4-hydroxy-tetrahydrodipicolinate synthase (298 aa).

Residue T48 coordinates pyruvate. Y137 functions as the Proton donor/acceptor in the catalytic mechanism. K166 serves as the catalytic Schiff-base intermediate with substrate. I207 contacts pyruvate.

Belongs to the DapA family. In terms of assembly, homotetramer; dimer of dimers.

It localises to the cytoplasm. It carries out the reaction L-aspartate 4-semialdehyde + pyruvate = (2S,4S)-4-hydroxy-2,3,4,5-tetrahydrodipicolinate + H2O + H(+). The protein operates within amino-acid biosynthesis; L-lysine biosynthesis via DAP pathway; (S)-tetrahydrodipicolinate from L-aspartate: step 3/4. Its function is as follows. Catalyzes the condensation of (S)-aspartate-beta-semialdehyde [(S)-ASA] and pyruvate to 4-hydroxy-tetrahydrodipicolinate (HTPA). The chain is 4-hydroxy-tetrahydrodipicolinate synthase from Campylobacter hominis (strain ATCC BAA-381 / DSM 21671 / CCUG 45161 / LMG 19568 / NCTC 13146 / CH001A).